Consider the following 98-residue polypeptide: Integration host factor subunit alpha (98 aa).

The disordered stretch occupies residues 51–71 (NFDLRDKNERPGRNPKTGEDI). The span at 53-69 (DLRDKNERPGRNPKTGE) shows a compositional bias: basic and acidic residues.

This sequence belongs to the bacterial histone-like protein family. Heterodimer of an alpha and a beta chain.

This protein is one of the two subunits of integration host factor, a specific DNA-binding protein that functions in genetic recombination as well as in transcriptional and translational control. This chain is Integration host factor subunit alpha, found in Vibrio campbellii (strain ATCC BAA-1116).